Here is a 470-residue protein sequence, read N- to C-terminus: 6-phospho-beta-galactosidase (470 aa).

The D-galactose 6-phosphate site is built by Gln-19, His-116, Asn-159, Glu-160, and Asn-297. The Proton donor role is filled by Glu-160. Residue Glu-375 is the Nucleophile of the active site. D-galactose 6-phosphate is bound by residues Ser-430, Trp-431, Lys-437, and Tyr-439.

Belongs to the glycosyl hydrolase 1 family.

The enzyme catalyses a 6-phospho-beta-D-galactoside + H2O = D-galactose 6-phosphate + an alcohol. Its pathway is carbohydrate metabolism; lactose degradation; D-galactose 6-phosphate and beta-D-glucose from lactose 6-phosphate: step 1/1. This Staphylococcus aureus (strain COL) protein is 6-phospho-beta-galactosidase.